Consider the following 643-residue polypeptide: Probable potassium transport system protein Kup 2 (643 aa).

The tract at residues 1–20 (MSSHVPSFLRGTPDMTAHGG) is disordered. 12 helical membrane passes run 27 to 47 (VAGL…TSPL), 70 to 90 (VLSL…VIII), 120 to 140 (LMVS…SIIT), 157 to 177 (PHLE…LFAI), 185 to 205 (VGKM…ILGI), 231 to 251 (GWHA…AEAL), 267 to 287 (WYLL…ALLI), 300 to 320 (LAPA…TVIA), 357 to 377 (IYLP…VVGF), 389 to 409 (VAVT…MLLI), 419 to 439 (WLIG…SIKI), and 440 to 460 (PDGG…LTTW).

It belongs to the HAK/KUP transporter (TC 2.A.72) family.

It is found in the cell inner membrane. The catalysed reaction is K(+)(in) + H(+)(in) = K(+)(out) + H(+)(out). Transport of potassium into the cell. Likely operates as a K(+):H(+) symporter. The sequence is that of Probable potassium transport system protein Kup 2 from Paramagnetospirillum magneticum (strain ATCC 700264 / AMB-1) (Magnetospirillum magneticum).